The sequence spans 210 residues: Thymidylate kinase (210 aa).

ATP is bound at residue 10-17 (GPEGAGKS).

This sequence belongs to the thymidylate kinase family.

It carries out the reaction dTMP + ATP = dTDP + ADP. Functionally, phosphorylation of dTMP to form dTDP in both de novo and salvage pathways of dTTP synthesis. The protein is Thymidylate kinase of Pseudomonas fluorescens (strain Pf0-1).